The sequence spans 173 residues: Glutamyl-tRNA(Gln) amidotransferase subunit F, mitochondrial (173 aa).

The transit peptide at 1 to 15 directs the protein to the mitochondrion; it reads MSRFMIRAVFFRRYT.

Belongs to the GatF family. Subunit of the heterotrimeric GatFAB amidotransferase (AdT) complex, composed of A, B and F subunits.

Its subcellular location is the mitochondrion inner membrane. It carries out the reaction L-glutamyl-tRNA(Gln) + L-glutamine + ATP + H2O = L-glutaminyl-tRNA(Gln) + L-glutamate + ADP + phosphate + H(+). Functionally, allows the formation of correctly charged Gln-tRNA(Gln) through the transamidation of misacylated Glu-tRNA(Gln) in the mitochondria. The reaction takes place in the presence of glutamine and ATP through an activated gamma-phospho-Glu-tRNA(Gln). Required for proper protein synthesis within the mitochondrion. This Candida glabrata (strain ATCC 2001 / BCRC 20586 / JCM 3761 / NBRC 0622 / NRRL Y-65 / CBS 138) (Yeast) protein is Glutamyl-tRNA(Gln) amidotransferase subunit F, mitochondrial.